A 378-amino-acid polypeptide reads, in one-letter code: MSADQPVTVEVGLGDRAYDILIGSGLLSRAGEEISRRLPGTRAAVVTDENVAAAHLDTLKAGLEKGGIQPTVITMPPGEKTKSFAHLEEVVDGILAARLERGDVVIALGGGVIGDLTGFSAGIVRRGMNFVQVPTSLLAQVDSSVGGKTGINSPRGKNLVGVFLQPKLVLADTEVLDTLPIREFRAGYAELAKYGLIDRPELFAWLEANWQKVFAGGPERAQAIAEACRAKADVVARDEFETGDRALLNLGHTFGHALEAATQYDGARLVHGEGVAIGMALAHRFSSRLNLASPDDAARVETHLRAVGLPWRMADIPGELPDAEALLAFITQDKKVSRGALTFILTRGIGQAFIAKDVPASEVLSFLRENHPTSRKAG.

Residues 111–115 (GVIGD), 135–136 (TS), K148, and K157 each bind NAD(+). Zn(2+) contacts are provided by E190, H252, and H271.

It belongs to the sugar phosphate cyclases superfamily. Dehydroquinate synthase family. It depends on NAD(+) as a cofactor. Requires Co(2+) as cofactor. Zn(2+) is required as a cofactor.

The protein localises to the cytoplasm. The enzyme catalyses 7-phospho-2-dehydro-3-deoxy-D-arabino-heptonate = 3-dehydroquinate + phosphate. The protein operates within metabolic intermediate biosynthesis; chorismate biosynthesis; chorismate from D-erythrose 4-phosphate and phosphoenolpyruvate: step 2/7. Catalyzes the conversion of 3-deoxy-D-arabino-heptulosonate 7-phosphate (DAHP) to dehydroquinate (DHQ). This Mesorhizobium japonicum (strain LMG 29417 / CECT 9101 / MAFF 303099) (Mesorhizobium loti (strain MAFF 303099)) protein is 3-dehydroquinate synthase.